A 353-amino-acid polypeptide reads, in one-letter code: Endophilin-A1 (353 aa).

Residues 1 to 21 are membrane-binding amphipathic helix; it reads MSVAGLKKQFHKATQKVSEKV. A disordered region spans residues 1–27; sequence MSVAGLKKQFHKATQKVSEKVGGAEGT. Residues 1 to 125 are binds and tubulates liposomes; the sequence is MSVAGLKKQF…DVGEAMKELS (125 aa). The BAR domain maps to 18–249; that stretch reads SEKVGGAEGT…LEDRIKEASS (232 aa). The interval 60 to 87 is required for dimerization upon membrane association; it reads PNPASRAKLSMINTMSKIRGQEKGPGYP. Residues 181-201 are a coiled coil; it reads EELRQALEKFDESKEIAESSM. The segment covering 243–257 has biased composition (basic and acidic residues); it reads RIKEASSQPKREYQP. Residues 243–290 form a disordered region; sequence RIKEASSQPKREYQPKPRMSLDFTSGGDNTQHNGGISHATTPKPAGAH. Over residues 264 to 282 the composition is skewed to polar residues; the sequence is DFTSGGDNTQHNGGISHAT. Residues 291 to 350 enclose the SH3 domain; the sequence is MDQPCCRALYDFEPENEGELGFKEGDIITLTNQIDENWYEGMLHGQSGFFPINYVDILVP.

It belongs to the endophilin family. As to quaternary structure, monomer; in cytoplasm. Homodimer; when associated with membranes. Associates with MAP4K3. This interaction appears to regulate MAP4K3-mediated JNK activation. Interacts with SYNJ1 and DNM1. In terms of tissue distribution, highly expressed in brain.

Its subcellular location is the cytoplasm. It localises to the membrane. The protein resides in the early endosome. The protein localises to the presynapse. Functionally, implicated in synaptic vesicle endocytosis. May recruit other proteins to membranes with high curvature. The protein is Endophilin-A1 of Gallus gallus (Chicken).